The primary structure comprises 1738 residues: Sodium leak channel NALCN (1738 aa).

At 1–36 the chain is on the cytoplasmic side; sequence MLKRKQSSRVEAQPVTDFGPDESLSDNADILWINKP. A helical transmembrane segment spans residues 37–57; that stretch reads WVHSLLRICAIISVIPVCMNT. The Extracellular portion of the chain corresponds to 58–65; that stretch reads PMTFEHYP. Residues 66–90 traverse the membrane as a helical segment; sequence PLQYVTFTLDTLLMFLYTAEMIAKM. At 91–106 the chain is on the cytoplasmic side; the sequence is HIRGIVKGDSSYVKDR. A helical transmembrane segment spans residues 107 to 129; that stretch reads WCVFDGFMVFCLWVSLVLQVFEI. The Extracellular portion of the chain corresponds to 130–137; the sequence is ADIVDQMS. Residues 138–158 traverse the membrane as a helical; Voltage-sensor segment; that stretch reads PWGMLRIPRPLIMIRAFRIYF. The Cytoplasmic segment spans residues 159-173; sequence RFELPRTRITNILKR. A helical membrane pass occupies residues 174–199; it reads SGEQIWSVSIFLLFFLLLYGILGVQM. Residues 200 to 269 lie on the Extracellular side of the membrane; it reads FGTFTYHCVV…YSGFNEIGTS (70 aa). Intrachain disulfides connect Cys-207–Cys-239 and Cys-229–Cys-245. N-linked (GlcNAc...) asparagine glycans are attached at residues Asn-210 and Asn-216. The pore-forming intramembrane region spans 270–289; it reads IFTVYEASSQEGWVFLMYRA. The Extracellular portion of the chain corresponds to 290–294; it reads IDSFP. The helical transmembrane segment at 295–322 threads the bilayer; it reads RWRSYFYFITLIFFLAWLVKNVFIAVII. Residues 323 to 382 are Cytoplasmic-facing; it reads ETFAEIRVQFQQMWGTRSSTTSTATTQMFHEDAAGGWQLVAVDVNKPQGRAPACLQKMMR. The chain crosses the membrane as a helical span at residues 383 to 403; it reads SSVFHMFILSMVTVDVIVAAS. At 404 to 416 the chain is on the extracellular side; that stretch reads NYYKGENFRRQYD. Residues 417-439 traverse the membrane as a helical segment; it reads EFYLAEVAFTVLFDLEALLKIWC. The Cytoplasmic portion of the chain corresponds to 440 to 447; the sequence is LGFTGYIS. Residues 448-468 traverse the membrane as a helical segment; the sequence is SSLHKFELLLVIGTTLHVYPD. At 469–472 the chain is on the extracellular side; the sequence is LYHS. Residues 473–492 traverse the membrane as a helical; Voltage-sensor segment; that stretch reads QFTYFQVLRVVRLIKISPAL. The Cytoplasmic portion of the chain corresponds to 493-502; sequence EDFVYKIFGP. The chain crosses the membrane as a helical span at residues 503–530; that stretch reads GKKLGSLVVFTASLLIVMSAISLQMFCF. Residues 531–543 lie on the Extracellular side of the membrane; sequence VEELDRFTTFPRA. An intramembrane region (pore-forming) is located at residues 544-563; the sequence is FMSMFQILTQEGWVDVMDQT. At 564–569 the chain is on the extracellular side; it reads LNAVGH. A helical transmembrane segment spans residues 570–599; that stretch reads MWAPLVAIYFILYHLFATLILLSLFVAVIL. Topologically, residues 600–886 are cytoplasmic; sequence DNLELDEDLK…QLYDLLGLVT (287 aa). Residues 762 to 789 are disordered; sequence QERRSLRHGSNSQRISRGKSLETLTQDH. A coiled-coil region spans residues 795–830; it reads YRNAQREDSEIKMIQEKKEQAEMKRKVQEEELRENH. The helical transmembrane segment at 887–906 threads the bilayer; it reads YLDWVMITVTICSCISMMFE. The Extracellular portion of the chain corresponds to 907-915; it reads SPFRRVMHA. A helical transmembrane segment spans residues 916 to 939; the sequence is PTLQIAEYVFVIFMSIELNLKIMA. Residues 940–947 are Cytoplasmic-facing; that stretch reads DGLFFTPT. The chain crosses the membrane as a helical span at residues 948–972; that stretch reads AVIRDFGGVMDIFIYLVSLIFLCWM. The Extracellular segment spans residues 973–980; the sequence is PQNVPAES. Residues 981 to 1003 traverse the membrane as a helical; Voltage-sensor segment; that stretch reads GAQLLMVLRCLRPLRIFKLVPQM. Residues 1004-1015 are Cytoplasmic-facing; sequence RKVVRELFSGFK. The chain crosses the membrane as a helical span at residues 1016-1039; that stretch reads EIFLVSILLLTLMLVFASFGVQLF. Residues 1040-1104 lie on the Extracellular side of the membrane; it reads AGKLAKCNDP…NFNFDNVGNA (65 aa). Residues Cys-1046 and Cys-1057 are joined by a disulfide bond. An N-linked (GlcNAc...) asparagine glycan is attached at Asn-1064. An intramembrane region (pore-forming) is located at residues 1105–1124; that stretch reads MLALFEVLSLKGWVEVRDVI. Topologically, residues 1125–1129 are extracellular; it reads IHRVG. The chain crosses the membrane as a helical span at residues 1130-1159; the sequence is PIHGIYIHVFVFLGCMIGLTLFVGVVIANF. Residues 1160-1210 lie on the Cytoplasmic side of the membrane; sequence NENKGTALLTVDQRRWEDLKSRLKIAQPLHLPPRPDNDGFRAKMYDITQHP. Residues 1211–1227 form a helical membrane-spanning segment; the sequence is FFKRTIALLVLAQSVLL. Residues 1228–1236 lie on the Extracellular side of the membrane; the sequence is SVKWDVEDP. Residues 1237 to 1260 traverse the membrane as a helical segment; sequence VTVPLATMSVVFTFIFVLEVTMKI. Residues 1261-1271 lie on the Cytoplasmic side of the membrane; it reads IAMSPAGFWQS. The helical transmembrane segment at 1272 to 1293 threads the bilayer; the sequence is RRNRYDLLVTSLGVVWVVLHFA. Residues 1294–1296 are Extracellular-facing; it reads LLN. Residues 1297 to 1318 traverse the membrane as a helical; Voltage-sensor segment; it reads AYTYMMGACVIVFRFFSICGKH. Topologically, residues 1319–1331 are cytoplasmic; that stretch reads VTLKMLLLTVVVS. Residues 1332-1357 form a helical membrane-spanning segment; sequence MYKSFFIIVGMFLLLLCYAFAGVVLF. Topologically, residues 1358 to 1378 are extracellular; the sequence is GTVKYGENINRHANFSSAGKA. Residues 1379–1398 constitute an intramembrane region (pore-forming); that stretch reads ITVLFRIVTGEDWNKIMHDC. Topologically, residues 1399 to 1420 are extracellular; it reads MVQPPFCTPDEFTYWATDCGNY. A disulfide bond links Cys-1405 and Cys-1417. A helical membrane pass occupies residues 1421 to 1447; it reads AGALMYFCSFYVIIAYIMLNLLVAIIV. The Cytoplasmic segment spans residues 1448-1738; the sequence is ENFSLFYSTE…DESGDDLLDI (291 aa). Positions 1611-1679 are disordered; sequence PPSIETTQPS…WRLPSAPKPI (69 aa). Over residues 1613–1631 the composition is skewed to polar residues; it reads SIETTQPSEDTNANSQDHN. Low complexity predominate over residues 1633-1648; sequence QPESSSQQQLLSPTLS.

The protein belongs to the NALCN family. In terms of assembly, found in a complex with NALCN, UNC79, UNC80 and NACL1; these auxiliary subunits are indispensable for the function of NALCN channel. Interacts with UNC80; required for the NALCN activation/inhibition by GPCRs in neurons. Found in a complex with NALCN, UNC79 and UNC80; UNC80 bridges NALCN to UNC79. Interacts with CHRM3. In terms of processing, phosphorylated on tyrosine residues. In terms of tissue distribution, predominantly expressed in the brain, moderately in the heart and weakly in the pancreas.

The protein resides in the cell membrane. It catalyses the reaction Na(+)(in) = Na(+)(out). Inhibited by low micromolar concentrations of Gd(3+) and high micromolar concentrations of verapamil. Insensitive to tetrodotoxin (TTX) and potentiated by low external Ca(2+) concentration. In terms of biological role, voltage-gated ion channel responsible for the resting Na(+) permeability that controls neuronal excitability. NALCN channel functions as a multi-protein complex, which consists at least of NALCN, NALF1, UNC79 and UNC80. NALCN is the voltage-sensing, pore-forming subunit of the NALCN channel complex. NALCN channel complex is constitutively active and conducts monovalent cations but is blocked by physiological concentrations of extracellular divalent cations. In addition to its role in regulating neuronal excitability, is required for normal respiratory rhythm, systemic osmoregulation by controlling the serum sodium concentration and in the regulation of the intestinal pace-making activity in the interstitial cells of Cajal. NALCN channel is also activated by neuropeptides such as neurotensin and substance P (SP) through a SRC family kinases-dependent pathway. In addition, NALCN activity is enhanced/modulated by several GPCRs, such as CHRM3. This is Sodium leak channel NALCN (Nalcn) from Rattus norvegicus (Rat).